The chain runs to 834 residues: Ras GTPase-activating protein 3 (834 aa).

2 consecutive C2 domains span residues M1–F112 and V123–Y263. A2 is subject to N-acetylalanine. Y66 bears the Phosphotyrosine mark. S77 carries the phosphoserine modification. Residue T110 is modified to Phosphothreonine. In terms of domain architecture, Ras-GAP spans G346–I561. The 102-residue stretch at I576–Q677 folds into the PH domain. A Btk-type zinc finger spans residues N679–G715. The Zn(2+) site is built by H687, C698, C699, and C709. S809 and S833 each carry phosphoserine.

As to expression, high levels in brain, lower in spleen and lung.

In terms of biological role, inhibitory regulator of the Ras-cyclic AMP pathway. May bind inositol tetrakisphosphate (IP4). The sequence is that of Ras GTPase-activating protein 3 (Rasa3) from Mus musculus (Mouse).